We begin with the raw amino-acid sequence, 151 residues long: D-aminoacyl-tRNA deacylase (151 aa).

The Gly-cisPro motif, important for rejection of L-amino acids motif lies at 136–137 (GP).

Belongs to the DTD family. As to quaternary structure, homodimer.

It is found in the cytoplasm. The enzyme catalyses glycyl-tRNA(Ala) + H2O = tRNA(Ala) + glycine + H(+). It catalyses the reaction a D-aminoacyl-tRNA + H2O = a tRNA + a D-alpha-amino acid + H(+). An aminoacyl-tRNA editing enzyme that deacylates mischarged D-aminoacyl-tRNAs. Also deacylates mischarged glycyl-tRNA(Ala), protecting cells against glycine mischarging by AlaRS. Acts via tRNA-based rather than protein-based catalysis; rejects L-amino acids rather than detecting D-amino acids in the active site. By recycling D-aminoacyl-tRNA to D-amino acids and free tRNA molecules, this enzyme counteracts the toxicity associated with the formation of D-aminoacyl-tRNA entities in vivo and helps enforce protein L-homochirality. This Lactococcus lactis subsp. cremoris (strain SK11) protein is D-aminoacyl-tRNA deacylase.